We begin with the raw amino-acid sequence, 372 residues long: 3,5-dihydroxyphenylacetyl-CoA synthase (372 aa).

Cys-160 is an active-site residue.

The protein belongs to the thiolase-like superfamily. Chalcone/stilbene synthases family.

It catalyses the reaction 4 malonyl-CoA + 4 H(+) = (3,5-dihydroxyphenyl)acetyl-CoA + 4 CO2 + 3 CoA + H2O. The protein operates within antibiotic biosynthesis. Involved in the biosynthesis of the nonproteinogenic amino acid monomer (S)-3,5-dihydroxyphenylglycine (Dpg) responsible of the production of balhimycin antibiotic. Catalyzes the Claisen condensation of four molecules of malonyl-CoA to yield 3,5-dihydroxyphenylacetyl-CoA (DPA-CoA) and three free coenzyme A (CoA). DpgA requires the presence of the dehydratases DpgB and DpgD to facilitate the aromatization of the DPA-S-DgpA or DPA-S-CoA intermediate. The protein is 3,5-dihydroxyphenylacetyl-CoA synthase of Amycolatopsis balhimycina.